Reading from the N-terminus, the 596-residue chain is Cell adhesion molecule CEACAM20 (596 aa).

A signal peptide spans 1–30 (MGPADSWGHHWMGILLSASLCTVWSPPAAA). The Extracellular portion of the chain corresponds to 31-450 (QLTLNANPLD…SSLSSGAIAG (420 aa)). Ig-like C2-type domains are found at residues 58 to 154 (PQIH…PIFL), 160 to 246 (PDPV…GTLK), 256 to 341 (PQVV…LELT), and 346 to 432 (PDQV…TSVL). Cys90 and Cys138 are oxidised to a cystine. N-linked (GlcNAc...) asparagine glycosylation is found at Asn96 and Asn105. Cysteines 276 and 324 form a disulfide. N-linked (GlcNAc...) asparagine glycosylation is found at Asn280, Asn306, Asn317, Asn368, and Asn415. Cys375 and Cys416 are joined by a disulfide. The helical transmembrane segment at 451 to 471 (IVIGILAVIAVASELGYFLCI) threads the bilayer. At 472 to 585 (RNARRPSRKT…SIYEELVNPE (114 aa)) the chain is on the cytoplasmic side. 2 disordered regions span residues 477 to 510 (PSRK…LSPE) and 527 to 563 (QPPD…LMPP). Positions 501–510 (EPSSESLSPE) are enriched in low complexity. Pro residues predominate over residues 553-562 (WKPPPKPLMP). Phosphotyrosine is present on residues Tyr578 and Tyr589.

Belongs to the immunoglobulin superfamily. CEA family. Interacts (via extracellular domain) with PTPRH (via extracellular domain); the interaction dephosphorylates CEACAM20. Interacts (phosphorylated form) with SYK (via SH2 domains); the interaction further enhances CEACAM20 phosphorylation. Phosphorylated on tyrosine residues by SYK, SRC and FYN in vitro.

It is found in the cell projection. It localises to the microvillus membrane. Its subcellular location is the apical cell membrane. Its function is as follows. Together with the tyrosine-protein kinase SYK, enhances production of the cytokine CXCL8/IL-8 via the NFKB pathway and may thus have a role in the intestinal immune response. This Homo sapiens (Human) protein is Cell adhesion molecule CEACAM20.